Reading from the N-terminus, the 266-residue chain is GTP cyclohydrolase FolE2 (266 aa).

It belongs to the GTP cyclohydrolase IV family.

It carries out the reaction GTP + H2O = 7,8-dihydroneopterin 3'-triphosphate + formate + H(+). Its pathway is cofactor biosynthesis; 7,8-dihydroneopterin triphosphate biosynthesis; 7,8-dihydroneopterin triphosphate from GTP: step 1/1. In terms of biological role, converts GTP to 7,8-dihydroneopterin triphosphate. In Burkholderia mallei (strain ATCC 23344), this protein is GTP cyclohydrolase FolE2.